The chain runs to 162 residues: NADH-quinone oxidoreductase subunit I (162 aa).

4Fe-4S ferredoxin-type domains follow at residues 53–83 (LRRY…IEAE) and 93–122 (TRYD…EGPN). Residues Cys-63, Cys-66, Cys-69, Cys-73, Cys-102, Cys-105, Cys-108, and Cys-112 each contribute to the [4Fe-4S] cluster site.

Belongs to the complex I 23 kDa subunit family. As to quaternary structure, NDH-1 is composed of 14 different subunits. Subunits NuoA, H, J, K, L, M, N constitute the membrane sector of the complex. The cofactor is [4Fe-4S] cluster.

It localises to the cell inner membrane. The catalysed reaction is a quinone + NADH + 5 H(+)(in) = a quinol + NAD(+) + 4 H(+)(out). In terms of biological role, NDH-1 shuttles electrons from NADH, via FMN and iron-sulfur (Fe-S) centers, to quinones in the respiratory chain. The immediate electron acceptor for the enzyme in this species is believed to be ubiquinone. Couples the redox reaction to proton translocation (for every two electrons transferred, four hydrogen ions are translocated across the cytoplasmic membrane), and thus conserves the redox energy in a proton gradient. The polypeptide is NADH-quinone oxidoreductase subunit I (Granulibacter bethesdensis (strain ATCC BAA-1260 / CGDNIH1)).